The primary structure comprises 371 residues: MSLETFKHSEALTFGVELELQLVNRHDYDLAPFAPDLLRALKGAEHAGDIKPEISPSMIEISTGICHTYQQALEELTVMRDLMVAASRSLNLGIAGGGTHPFQQWADRTISDSPRYQYISELYGYLAKQFTVFGQHVHIGCPSADESLFLLHAIGRYVPHFVALAASSPYVQGVDTGFASARLNSVAAFPMSGRAPFLLTWDAFTAYFEKMRNTGVIESMKDFYWDIRPKPEFGTIEVRVMDTPLTVQRACDIAAYIQMLARYLLLSRPFMPQEDDYLVYTFNRFQACRFGLEGEYVHPNELTRMPIADHILSICDALVPHAEALGSLEALANIRALAERRDGDAEWLRQVDADARSQRETVRKACDRWAA.

It belongs to the glutamate--cysteine ligase type 2 family. YbdK subfamily.

It carries out the reaction L-cysteine + L-glutamate + ATP = gamma-L-glutamyl-L-cysteine + ADP + phosphate + H(+). ATP-dependent carboxylate-amine ligase which exhibits weak glutamate--cysteine ligase activity. In Cupriavidus necator (strain ATCC 17699 / DSM 428 / KCTC 22496 / NCIMB 10442 / H16 / Stanier 337) (Ralstonia eutropha), this protein is Putative glutamate--cysteine ligase 2.